Reading from the N-terminus, the 825-residue chain is Quinic acid utilization activator (825 aa).

A compositionally biased stretch (polar residues) spans M1–N12. The segment at M1 to V45 is disordered. A compositionally biased stretch (basic and acidic residues) spans R18–R28. The zn(2)-C6 fungal-type DNA-binding region spans C49 to C76. Disordered stretches follow at residues E160–L186, Q204–L224, and G658–G683. The span at D165–I174 shows a compositional bias: basic and acidic residues. Polar residues predominate over residues G658–H672.

Its subcellular location is the nucleus. Transcription activation of genes for enzymes and proteins of quinate metabolism by binding to a 16 base-pair sequence (consensus 5'-GGATAANNNNTTATCC-3') in front of each qut gene. The polypeptide is Quinic acid utilization activator (qutA) (Emericella nidulans (strain FGSC A4 / ATCC 38163 / CBS 112.46 / NRRL 194 / M139) (Aspergillus nidulans)).